Here is a 509-residue protein sequence, read N- to C-terminus: Cytochrome P450 monooxygenase traB (509 aa).

A helical membrane pass occupies residues 8–28 (LVELVSITGGLIVLFIAYTGF). C453 provides a ligand contact to heme.

The protein belongs to the cytochrome P450 family. It depends on heme as a cofactor.

Its subcellular location is the membrane. It participates in secondary metabolite biosynthesis. In terms of biological role, cytochrome P450 monooxygenase; part of the tra gene cluster that produces terrestric acid. The clavatol biosynthesis cluster cla and the terrestric acid cluster tra are both involved in the production of peniphenones and penilactones. The non-reducing PKS claF is responsible for the formation of clavatol from successive condensations of 3 malonyl-CoA units, presumably with a simple acetyl-CoA starter unit, and 2 methylation steps. The esterase claE probably collaborates with claF by catalyzing the hydrolysis of ACP-bound acyl intermediates to free the ACP from stalled intermediates. The clavatol oxidase claD then converts clavatol to hydroxyclavatol. Spontaneous dehydration of hydroxyclavatol leads to the accumulation of the highly active ortho-quinone methide. On the other hand, the PKS-NRPS hybrid traA is involved in the formation of crustosic acid, with the help of traB and traD. The polyketide synthase module (PKS) of traA is responsible for the synthesis of the polyketide backbone via the condensation of an acetyl-CoA starter unit with 3 malonyl-CoA units. The downstream nonribosomal peptide synthetase (NRPS) module then amidates the carboxyl end of the polyketide with L-malic acid. Because traA lacks a designated enoylreductase (ER) domain, the required activity is provided the enoyl reductase traG. Crustosic acid undergoes decarboxylation and isomerization to the terrestric acid, catalyzed by the 2-oxoglutarate-dependent dioxygenase traH. Both acids are further converted to the 2 gamma-butyrolactones (R)-5-methyltetronic acid and (S)-5-carboxylmethyltetronic acid, with involvement of the cytochrome P450 monooxygenase claJ. Spontaneous addition of the methide to these gamma-butyrolactones leads to peniphenone D and penilactone D, which undergo again stereospecific attacking by methide to give penilactones A and B. The protein is Cytochrome P450 monooxygenase traB of Penicillium crustosum (Blue mold fungus).